We begin with the raw amino-acid sequence, 277 residues long: MNRPHSATGDRPLALVDEHAHAWSPKTARARFRKGLTGPTAGVAAGHTQANLISVPADWAYDMLLFCTRNPQPCPVLDVTDAGSWTTVLADGADLRTDLPRYRVWRDGELVDEPSDVREHWRDDLVTFLIGCSFTFEWALAAAGVPIRHVEQGRNVPMYVTSRACRPAGRLRGPMVVSMRPVPPAHLSAAIHESSLLPAVHGSPVHCGDPSALGIDDLDRPDFGEAVYREPDDIPVFWACGVTPQAAVMASRPPFALTHAPGQMFLTDARDEQYRVA.

It belongs to the D-glutamate cyclase family.

The polypeptide is Putative hydro-lyase SCO1412 (Streptomyces coelicolor (strain ATCC BAA-471 / A3(2) / M145)).